The chain runs to 256 residues: MSLAVRVIPCLDVDGGRVVKGVNFQNLRDAGDPVELARRYDAEGADELTFLDVTASSSNRETTYDVVRRTAEQVFIPLTVGGGVRSTEDVDRLLRAGADKVSINTAAVRRPELIREIAQEFGSQVLVLSADVRRTVNGTATPSGFEITTHGGRQGTGIDAVEWVQQAEELGAGEILLNSMDADGTKSGFDLELIRAVRKAVNVPLIASGGAGAVEHFAPAVDAGANAVLAASVFHFGEITISDVKAELRAKGYPVR.

Active-site residues include Asp-12 and Asp-131.

It belongs to the HisA/HisF family. Heterodimer of HisH and HisF.

Its subcellular location is the cytoplasm. The enzyme catalyses 5-[(5-phospho-1-deoxy-D-ribulos-1-ylimino)methylamino]-1-(5-phospho-beta-D-ribosyl)imidazole-4-carboxamide + L-glutamine = D-erythro-1-(imidazol-4-yl)glycerol 3-phosphate + 5-amino-1-(5-phospho-beta-D-ribosyl)imidazole-4-carboxamide + L-glutamate + H(+). It participates in amino-acid biosynthesis; L-histidine biosynthesis; L-histidine from 5-phospho-alpha-D-ribose 1-diphosphate: step 5/9. IGPS catalyzes the conversion of PRFAR and glutamine to IGP, AICAR and glutamate. The HisF subunit catalyzes the cyclization activity that produces IGP and AICAR from PRFAR using the ammonia provided by the HisH subunit. In Thermobifida fusca (strain YX), this protein is Imidazole glycerol phosphate synthase subunit HisF.